A 558-amino-acid polypeptide reads, in one-letter code: Alpha-1,3-mannosyltransferase MNT2 (558 aa).

Residues 1–6 (MRRKNR) are Cytoplasmic-facing. A helical; Signal-anchor for type II membrane protein transmembrane segment spans residues 7–27 (LFILVVLLGIVLVVYYSQLNS). Topologically, residues 28-558 (LDLVEPVQSS…QIVDIWNKDI (531 aa)) are lumenal. The N-linked (GlcNAc...) asparagine glycan is linked to Asn-187.

The protein belongs to the MNN1/MNT family.

It is found in the golgi apparatus membrane. It functions in the pathway protein modification; protein glycosylation. Functionally, mannosyltransferase involved in adding the 4th and 5th mannose residues of O-linked glycans. This is Alpha-1,3-mannosyltransferase MNT2 (MNT2) from Saccharomyces cerevisiae (strain ATCC 204508 / S288c) (Baker's yeast).